The chain runs to 595 residues: UvrABC system protein C (595 aa).

A GIY-YIG domain is found at 14 to 91 (NNPGCYLHKD…IQENMPKFNI (78 aa)). The 36-residue stretch at 196–231 (DKIVNQLKAKMKDMSDQMEFERAAEYRDLIEAVSTL) folds into the UVR domain.

This sequence belongs to the UvrC family. As to quaternary structure, interacts with UvrB in an incision complex.

The protein localises to the cytoplasm. Its function is as follows. The UvrABC repair system catalyzes the recognition and processing of DNA lesions. UvrC both incises the 5' and 3' sides of the lesion. The N-terminal half is responsible for the 3' incision and the C-terminal half is responsible for the 5' incision. The protein is UvrABC system protein C of Streptococcus thermophilus (strain ATCC BAA-250 / LMG 18311).